We begin with the raw amino-acid sequence, 231 residues long: Ribonuclease 3 (231 aa).

Residues 5–134 form the RNase III domain; that stretch reads QKKLKNDYGL…FLGALFIDQG (130 aa). Glu-47 contributes to the Mg(2+) binding site. Residue Asp-51 is part of the active site. Residues Asn-120 and Glu-123 each coordinate Mg(2+). Glu-123 is a catalytic residue. Residues 160 to 229 form the DRBM domain; that stretch reads DYKTELQEVL…AENAIKGQNH (70 aa).

It belongs to the ribonuclease III family. As to quaternary structure, homodimer. The cofactor is Mg(2+).

It localises to the cytoplasm. The catalysed reaction is Endonucleolytic cleavage to 5'-phosphomonoester.. Its function is as follows. Digests double-stranded RNA. Involved in the processing of primary rRNA transcript to yield the immediate precursors to the large and small rRNAs (23S and 16S). Processes some mRNAs, and tRNAs when they are encoded in the rRNA operon. Processes pre-crRNA and tracrRNA of type II CRISPR loci if present in the organism. This Lactococcus lactis subsp. lactis (strain IL1403) (Streptococcus lactis) protein is Ribonuclease 3.